A 406-amino-acid chain; its full sequence is Succinylornithine transaminase (406 aa).

At Lys252 the chain carries N6-(pyridoxal phosphate)lysine.

It belongs to the class-III pyridoxal-phosphate-dependent aminotransferase family. AstC subfamily. The cofactor is pyridoxal 5'-phosphate.

It carries out the reaction N(2)-succinyl-L-ornithine + 2-oxoglutarate = N-succinyl-L-glutamate 5-semialdehyde + L-glutamate. Its pathway is amino-acid degradation; L-arginine degradation via AST pathway; L-glutamate and succinate from L-arginine: step 3/5. Functionally, catalyzes the transamination of N(2)-succinylornithine and alpha-ketoglutarate into N(2)-succinylglutamate semialdehyde and glutamate. Can also act as an acetylornithine aminotransferase. The protein is Succinylornithine transaminase of Shigella boydii serotype 18 (strain CDC 3083-94 / BS512).